Here is a 501-residue protein sequence, read N- to C-terminus: ATP synthase subunit alpha (501 aa).

Position 169-176 (169-176 (GDRQTGKT)) interacts with ATP.

It belongs to the ATPase alpha/beta chains family. F-type ATPases have 2 components, CF(1) - the catalytic core - and CF(0) - the membrane proton channel. CF(1) has five subunits: alpha(3), beta(3), gamma(1), delta(1), epsilon(1). CF(0) has three main subunits: a(1), b(2) and c(9-12). The alpha and beta chains form an alternating ring which encloses part of the gamma chain. CF(1) is attached to CF(0) by a central stalk formed by the gamma and epsilon chains, while a peripheral stalk is formed by the delta and b chains.

It localises to the cell membrane. It catalyses the reaction ATP + H2O + 4 H(+)(in) = ADP + phosphate + 5 H(+)(out). In terms of biological role, produces ATP from ADP in the presence of a proton gradient across the membrane. The alpha chain is a regulatory subunit. The protein is ATP synthase subunit alpha of Streptococcus pyogenes serotype M2 (strain MGAS10270).